Here is a 488-residue protein sequence, read N- to C-terminus: Glycogen synthase (488 aa).

Arg20 contributes to the ADP-alpha-D-glucose binding site.

The protein belongs to the glycosyltransferase 1 family. Bacterial/plant glycogen synthase subfamily.

It carries out the reaction [(1-&gt;4)-alpha-D-glucosyl](n) + ADP-alpha-D-glucose = [(1-&gt;4)-alpha-D-glucosyl](n+1) + ADP + H(+). Its pathway is glycan biosynthesis; glycogen biosynthesis. Functionally, synthesizes alpha-1,4-glucan chains using ADP-glucose. The chain is Glycogen synthase from Chlorobaculum tepidum (strain ATCC 49652 / DSM 12025 / NBRC 103806 / TLS) (Chlorobium tepidum).